We begin with the raw amino-acid sequence, 542 residues long: Calcium/calmodulin-dependent protein kinase type II subunit beta (542 aa).

One can recognise a Protein kinase domain in the interval 14–272 (YQLYEDIGKG…AHEALKHPWV (259 aa)). Phosphotyrosine is present on Tyr17. ATP-binding positions include 20-28 (IGKGAFSVV) and Lys43. Residue Asp136 is the Proton acceptor of the active site. Positions 283 to 292 (HRQETVECLK) are autoinhibitory domain. The residue at position 287 (Thr287) is a Phosphothreonine; by autocatalysis. The tract at residues 291–301 (LKKFNARRKLK) is calmodulin-binding. A phosphothreonine; by autocatalysis mark is found at Thr306 and Thr307. The segment at 349 to 407 (ADGVKPQTNSTKNSAAATSPKGTLPPAALEPQTTVIHNPVDGIKESSDSTHTTIEDEDT) is disordered. The span at 354 to 369 (PQTNSTKNSAAATSPK) shows a compositional bias: polar residues. Phosphoserine is present on residues Ser367, Ser394, and Ser397. Thr400 and Thr401 each carry phosphothreonine.

The protein belongs to the protein kinase superfamily. CAMK Ser/Thr protein kinase family. CaMK subfamily. In terms of assembly, CAMK2 is composed of 4 different chains: alpha (CAMK2A), beta (CAMK2B), gamma (CAMK2G), and delta (CAMK2D). The different isoforms assemble into homo- or heteromultimeric holoenzymes composed of 12 subunits with two hexameric rings stacked one on top of the other. Interacts with SYNGAP1, CAMK2N2 and MPDZ. Interacts with FOXO3. Interacts (when in a kinase inactive state not associated with calmodulin) with ARC; leading to target ARC to inactive synapses. Interacts with CAMK2N1; this interaction requires CAMK2B activation by Ca(2+). In terms of processing, autophosphorylation of Thr-287 following activation by Ca(2+)/calmodulin. Phosphorylation of Thr-287 locks the kinase into an activated state.

The protein resides in the cytoplasm. It localises to the cytoskeleton. The protein localises to the microtubule organizing center. Its subcellular location is the centrosome. It is found in the sarcoplasmic reticulum membrane. The protein resides in the synapse. It carries out the reaction L-seryl-[protein] + ATP = O-phospho-L-seryl-[protein] + ADP + H(+). The catalysed reaction is L-threonyl-[protein] + ATP = O-phospho-L-threonyl-[protein] + ADP + H(+). Its activity is regulated as follows. Activated by Ca(2+)/calmodulin. Binding of calmodulin results in conformational change that relieves intrasteric autoinhibition and allows autophosphorylation of Thr-287 which turns the kinase in a constitutively active form and confers to the kinase a Ca(2+)-independent activity. Functionally, calcium/calmodulin-dependent protein kinase that functions autonomously after Ca(2+)/calmodulin-binding and autophosphorylation, and is involved in dendritic spine and synapse formation, neuronal plasticity and regulation of sarcoplasmic reticulum Ca(2+) transport in skeletal muscle. In neurons, plays an essential structural role in the reorganization of the actin cytoskeleton during plasticity by binding and bundling actin filaments in a kinase-independent manner. This structural function is required for correct targeting of CaMK2A, which acts downstream of NMDAR to promote dendritic spine and synapse formation and maintain synaptic plasticity which enables long-term potentiation (LTP) and hippocampus-dependent learning. In developing hippocampal neurons, promotes arborization of the dendritic tree and in mature neurons, promotes dendritic remodeling. Also regulates the migration of developing neurons. Participates in the modulation of skeletal muscle function in response to exercise. In slow-twitch muscles, is involved in regulation of sarcoplasmic reticulum (SR) Ca(2+) transport and in fast-twitch muscle participates in the control of Ca(2+) release from the SR through phosphorylation of triadin, a ryanodine receptor-coupling factor, and phospholamban (PLN/PLB), an endogenous inhibitor of SERCA2A/ATP2A2. In response to interferon-gamma (IFN-gamma) stimulation, catalyzes phosphorylation of STAT1, stimulating the JAK-STAT signaling pathway. Phosphorylates reticulophagy regulator RETREG1 at 'Ser-147' under endoplasmic reticulum stress conditions which enhances RETREG1 oligomerization and its membrane scission and reticulophagy activity. The chain is Calcium/calmodulin-dependent protein kinase type II subunit beta (CAMK2B) from Bos taurus (Bovine).